Reading from the N-terminus, the 488-residue chain is GTPase Der (488 aa).

2 consecutive EngA-type G domains span residues 3-166 (PVVA…AEAM) and 199-372 (IKLA…DSAT). GTP is bound by residues 9–16 (GRPNVGKS), 56–60 (DTGGI), 118–121 (NKVD), 205–212 (GKPNVGKS), 252–256 (DTAGV), and 317–320 (NKWD). In terms of domain architecture, KH-like spans 373–457 (RRVSTSMLTR…PIQLRFQEGD (85 aa)). Positions 469–488 (MSQERRRKRALSHIKDRKTK) are disordered. Residues 473–488 (RRRKRALSHIKDRKTK) are compositionally biased toward basic residues.

It belongs to the TRAFAC class TrmE-Era-EngA-EngB-Septin-like GTPase superfamily. EngA (Der) GTPase family. As to quaternary structure, associates with the 50S ribosomal subunit.

Its function is as follows. GTPase that plays an essential role in the late steps of ribosome biogenesis. In Shewanella sp. (strain W3-18-1), this protein is GTPase Der.